The primary structure comprises 1336 residues: Lysine-specific demethylase 2B (1336 aa).

The disordered stretch occupies residues 1–25 (MAGPQMGGSAEDHPPRKRHAAEKQK). A compositionally biased stretch (basic residues) spans 15–25 (PRKRHAAEKQK). Serine 57 is modified (phosphoserine). Residues 178–346 (FSHTKLEHLV…MQLRIYEIED (169 aa)) enclose the JmjC domain. Position 239 (threonine 239) interacts with substrate. 2 residues coordinate Fe cation: histidine 242 and aspartate 244. Lysine 259 lines the substrate pocket. Residue histidine 314 coordinates Fe cation. Residues 410 to 430 (MEEEACDQQPQEEEEKDEEGE) show a composition bias toward acidic residues. Residues 410–465 (MEEEACDQQPQEEEEKDEEGEGRDRAPKPPTDGSTSPTSTPSEDQEALGKKPKAPA) form a disordered region. Positions 440 to 451 (TDGSTSPTSTPS) are enriched in low complexity. 2 positions are modified to phosphoserine: serine 474 and serine 477. Threonine 493 bears the Phosphothreonine mark. Serine 497 carries the phosphoserine modification. Residues 606–652 (ARRRRTRCRKCEACLRTECGECHFCKDMKKFGGPGRMKQSCIMRQCI) form a CXXC-type zinc finger. Residues cysteine 613, cysteine 616, cysteine 619, cysteine 624, cysteine 627, cysteine 630, cysteine 646, cysteine 651, cysteine 662, cysteine 665, cysteine 688, cysteine 691, histidine 696, cysteine 699, cysteine 719, and cysteine 722 each contribute to the Zn(2+) site. The PHD-type zinc finger occupies 659 to 725 (TAVCLVCGEA…CWECPKCNHA (67 aa)). 2 disordered regions span residues 727–843 (KTGK…SLSP) and 855–1034 (QLKP…SPPK). Over residues 749–799 (KEQKMNRDNKEGQEPAKRRSECEEAPRRRSDEHSKKVPPDGLLRRKSDDVH) the composition is skewed to basic and acidic residues. Residues 819–843 (SSLQTSPGSSSHLSPRPPLGSSLSP) show a composition bias toward low complexity. Residues lysine 857 and lysine 890 each participate in a glycyl lysine isopeptide (Lys-Gly) (interchain with G-Cter in SUMO2) cross-link. Positions 902–911 (PKTRESDHSR) are enriched in basic and acidic residues. Over residues 932–941 (KVKMRRKRRL) the composition is skewed to basic residues. Residues 942–960 (PNKELSRELSKELNHEIQR) are compositionally biased toward basic and acidic residues. Residues 943-971 (NKELSRELSKELNHEIQRTENSLANENQQ) adopt a coiled-coil conformation. Serine 951 carries the post-translational modification Phosphoserine. Positions 961 to 971 (TENSLANENQQ) are enriched in polar residues. 4 positions are modified to phosphoserine: serine 975, serine 979, serine 1018, and serine 1031. Low complexity predominate over residues 1014-1024 (PSLRSPPRVIS). The F-box domain maps to 1059-1105 (DGAAHVMHREVWMAVFSYLSHQDLCVCMRVCRTWNRWCCDKRLWTRI). LRR repeat units lie at residues 1093-1120 (NRWC…MLSG), 1133-1154 (WTNI…LRDL), 1156-1182 (LSGC…DVQW), 1222-1247 (GLDI…HLSY), 1248-1277 (CNHV…NLSD), 1278-1302 (CNKV…DLRY), and 1303-1336 (CKQV…QKLS).

It belongs to the JHDM1 histone demethylase family. As to quaternary structure, interacts with SKP1, forming heterodimers. The heterodimeric KDM2B-SKP1 complex interacts with the PCGF1-BCORL1 heterodimeric complex to form a homotetrameric polycomb repression complex 1 (PRC1.1). Directly interacts with CUL1. The SKP1-KDM2B complex interacts with UBB. Fe(2+) serves as cofactor.

It is found in the nucleus. The protein resides in the nucleolus. Its subcellular location is the chromosome. The catalysed reaction is N(6),N(6)-dimethyl-L-lysyl(36)-[histone H3] + 2 2-oxoglutarate + 2 O2 = L-lysyl(36)-[histone H3] + 2 formaldehyde + 2 succinate + 2 CO2. Its activity is regulated as follows. Histone demethylase activity is inhibited by fumarate. Functionally, histone demethylase that demethylates 'Lys-4' and 'Lys-36' of histone H3, thereby playing a central role in histone code. Preferentially demethylates trimethylated H3 'Lys-4' and dimethylated H3 'Lys-36' residue while it has weak or no activity for mono- and tri-methylated H3 'Lys-36'. Preferentially binds the transcribed region of ribosomal RNA and represses the transcription of ribosomal RNA genes which inhibits cell growth and proliferation. May also serve as a substrate-recognition component of the SCF (SKP1-CUL1-F-box protein)-type E3 ubiquitin ligase complex. In Homo sapiens (Human), this protein is Lysine-specific demethylase 2B (KDM2B).